The sequence spans 263 residues: Tryptophan synthase alpha chain (263 aa).

Residues Glu41 and Asp52 each act as proton acceptor in the active site.

Belongs to the TrpA family. As to quaternary structure, tetramer of two alpha and two beta chains.

It carries out the reaction (1S,2R)-1-C-(indol-3-yl)glycerol 3-phosphate + L-serine = D-glyceraldehyde 3-phosphate + L-tryptophan + H2O. It functions in the pathway amino-acid biosynthesis; L-tryptophan biosynthesis; L-tryptophan from chorismate: step 5/5. Its function is as follows. The alpha subunit is responsible for the aldol cleavage of indoleglycerol phosphate to indole and glyceraldehyde 3-phosphate. This is Tryptophan synthase alpha chain from Geobacillus sp. (strain WCH70).